The following is a 253-amino-acid chain: Phosphoadenosine 5'-phosphosulfate reductase (253 aa).

The active-site Nucleophile; cysteine thiosulfonate intermediate is Cys239.

This sequence belongs to the PAPS reductase family. CysH subfamily.

It is found in the cytoplasm. It carries out the reaction [thioredoxin]-disulfide + sulfite + adenosine 3',5'-bisphosphate + 2 H(+) = [thioredoxin]-dithiol + 3'-phosphoadenylyl sulfate. The protein operates within sulfur metabolism; hydrogen sulfide biosynthesis; sulfite from sulfate: step 3/3. Catalyzes the formation of sulfite from phosphoadenosine 5'-phosphosulfate (PAPS) using thioredoxin as an electron donor. The protein is Phosphoadenosine 5'-phosphosulfate reductase of Aliivibrio fischeri (strain ATCC 700601 / ES114) (Vibrio fischeri).